Here is a 352-residue protein sequence, read N- to C-terminus: N-acetyl-gamma-glutamyl-phosphate reductase (352 aa).

Residue C155 is part of the active site.

The protein belongs to the NAGSA dehydrogenase family. Type 1 subfamily.

Its subcellular location is the cytoplasm. It catalyses the reaction N-acetyl-L-glutamate 5-semialdehyde + phosphate + NADP(+) = N-acetyl-L-glutamyl 5-phosphate + NADPH + H(+). Its pathway is amino-acid biosynthesis; L-arginine biosynthesis; N(2)-acetyl-L-ornithine from L-glutamate: step 3/4. Catalyzes the NADPH-dependent reduction of N-acetyl-5-glutamyl phosphate to yield N-acetyl-L-glutamate 5-semialdehyde. The protein is N-acetyl-gamma-glutamyl-phosphate reductase of Rippkaea orientalis (strain PCC 8801 / RF-1) (Cyanothece sp. (strain PCC 8801)).